The following is a 159-amino-acid chain: Cytochrome c-type biogenesis protein CcmE (159 aa).

Over Met1–Arg23 the chain is Cytoplasmic. A helical; Signal-anchor for type II membrane protein transmembrane segment spans residues Leu24–Ala44. At Leu45–Lys159 the chain is on the periplasmic side. Heme contacts are provided by His138 and Tyr142.

Belongs to the CcmE/CycJ family.

The protein localises to the cell inner membrane. Functionally, heme chaperone required for the biogenesis of c-type cytochromes. Transiently binds heme delivered by CcmC and transfers the heme to apo-cytochromes in a process facilitated by CcmF and CcmH. This chain is Cytochrome c-type biogenesis protein CcmE, found in Bartonella henselae (strain ATCC 49882 / DSM 28221 / CCUG 30454 / Houston 1) (Rochalimaea henselae).